Consider the following 307-residue polypeptide: Glycerol-3-phosphate dehydrogenase [NAD(P)+] (307 aa).

4 residues coordinate NADPH: Trp-14, Arg-34, Arg-35, and Lys-82. Sn-glycerol 3-phosphate-binding residues include Lys-82 and Gly-110. Ser-114 lines the NADPH pocket. Positions 165, 218, 228, 229, and 230 each coordinate sn-glycerol 3-phosphate. Catalysis depends on Lys-165, which acts as the Proton acceptor. Arg-229 lines the NADPH pocket. Glu-255 is a binding site for NADPH.

Belongs to the NAD-dependent glycerol-3-phosphate dehydrogenase family.

Its subcellular location is the cytoplasm. It carries out the reaction sn-glycerol 3-phosphate + NAD(+) = dihydroxyacetone phosphate + NADH + H(+). The enzyme catalyses sn-glycerol 3-phosphate + NADP(+) = dihydroxyacetone phosphate + NADPH + H(+). The protein operates within membrane lipid metabolism; glycerophospholipid metabolism. Its function is as follows. Catalyzes the reduction of the glycolytic intermediate dihydroxyacetone phosphate (DHAP) to sn-glycerol 3-phosphate (G3P), the key precursor for phospholipid synthesis. The sequence is that of Glycerol-3-phosphate dehydrogenase [NAD(P)+] from Nostoc sp. (strain PCC 7120 / SAG 25.82 / UTEX 2576).